Reading from the N-terminus, the 256-residue chain is Imidazole glycerol phosphate synthase subunit HisF (256 aa).

Residues Asp-11 and Asp-130 contribute to the active site.

This sequence belongs to the HisA/HisF family. Heterodimer of HisH and HisF.

It is found in the cytoplasm. It carries out the reaction 5-[(5-phospho-1-deoxy-D-ribulos-1-ylimino)methylamino]-1-(5-phospho-beta-D-ribosyl)imidazole-4-carboxamide + L-glutamine = D-erythro-1-(imidazol-4-yl)glycerol 3-phosphate + 5-amino-1-(5-phospho-beta-D-ribosyl)imidazole-4-carboxamide + L-glutamate + H(+). Its pathway is amino-acid biosynthesis; L-histidine biosynthesis; L-histidine from 5-phospho-alpha-D-ribose 1-diphosphate: step 5/9. In terms of biological role, IGPS catalyzes the conversion of PRFAR and glutamine to IGP, AICAR and glutamate. The HisF subunit catalyzes the cyclization activity that produces IGP and AICAR from PRFAR using the ammonia provided by the HisH subunit. This is Imidazole glycerol phosphate synthase subunit HisF from Synechococcus sp. (strain CC9605).